We begin with the raw amino-acid sequence, 97 residues long: Co-chaperonin GroES (97 aa).

This sequence belongs to the GroES chaperonin family. In terms of assembly, heptamer of 7 subunits arranged in a ring. Interacts with the chaperonin GroEL.

Its subcellular location is the cytoplasm. Its function is as follows. Together with the chaperonin GroEL, plays an essential role in assisting protein folding. The GroEL-GroES system forms a nano-cage that allows encapsulation of the non-native substrate proteins and provides a physical environment optimized to promote and accelerate protein folding. GroES binds to the apical surface of the GroEL ring, thereby capping the opening of the GroEL channel. This chain is Co-chaperonin GroES, found in Escherichia fergusonii (strain ATCC 35469 / DSM 13698 / CCUG 18766 / IAM 14443 / JCM 21226 / LMG 7866 / NBRC 102419 / NCTC 12128 / CDC 0568-73).